A 177-amino-acid polypeptide reads, in one-letter code: Inner membrane protein p22 (177 aa).

Topologically, residues 1–7 are intravirion; sequence MFNIKMT. A helical transmembrane segment spans residues 8–28; the sequence is ISTLLIALIILVIIILVVFLY. At 29–177 the chain is on the virion surface side; sequence YKKQQPPKKV…IALPRNHKHA (149 aa).

Belongs to the asfivirus inner membrane protein p22 family.

It localises to the virion membrane. It is found in the host cell membrane. This chain is Inner membrane protein p22, found in Ornithodoros (relapsing fever ticks).